Here is a 147-residue protein sequence, read N- to C-terminus: Large ribosomal subunit protein bL9 (147 aa).

The protein belongs to the bacterial ribosomal protein bL9 family.

Functionally, binds to the 23S rRNA. This Flavobacterium psychrophilum (strain ATCC 49511 / DSM 21280 / CIP 103535 / JIP02/86) protein is Large ribosomal subunit protein bL9.